The sequence spans 158 residues: Endoribonuclease YbeY (158 aa).

Zn(2+) contacts are provided by His118, His122, and His128.

It belongs to the endoribonuclease YbeY family. The cofactor is Zn(2+).

The protein resides in the cytoplasm. In terms of biological role, single strand-specific metallo-endoribonuclease involved in late-stage 70S ribosome quality control and in maturation of the 3' terminus of the 16S rRNA. In Bartonella bacilliformis (strain ATCC 35685 / KC583 / Herrer 020/F12,63), this protein is Endoribonuclease YbeY.